A 579-amino-acid polypeptide reads, in one-letter code: 2-isopropylmalate synthase (579 aa).

In terms of domain architecture, Pyruvate carboxyltransferase spans 33–308 (PRWLSTDLRD…DPGIDFSDIN (276 aa)). The Mg(2+) site is built by D42, H247, H249, and N283. The regulatory domain stretch occupies residues 450-579 (SSDLPVPLAS…IVAPLVAAGR (130 aa)).

This sequence belongs to the alpha-IPM synthase/homocitrate synthase family. LeuA type 2 subfamily. As to quaternary structure, homodimer. The cofactor is Mg(2+).

It localises to the cytoplasm. The enzyme catalyses 3-methyl-2-oxobutanoate + acetyl-CoA + H2O = (2S)-2-isopropylmalate + CoA + H(+). It functions in the pathway amino-acid biosynthesis; L-leucine biosynthesis; L-leucine from 3-methyl-2-oxobutanoate: step 1/4. Functionally, catalyzes the condensation of the acetyl group of acetyl-CoA with 3-methyl-2-oxobutanoate (2-ketoisovalerate) to form 3-carboxy-3-hydroxy-4-methylpentanoate (2-isopropylmalate). The polypeptide is 2-isopropylmalate synthase (Streptosporangium roseum (strain ATCC 12428 / DSM 43021 / JCM 3005 / KCTC 9067 / NCIMB 10171 / NRRL 2505 / NI 9100)).